Consider the following 308-residue polypeptide: Homeobox protein HMX3 (308 aa).

Disordered stretches follow at residues 1 to 57 (MPET…GFAL) and 107 to 184 (AEKS…KKKT). Positions 9–19 (PSAPPPPPPPK) are enriched in pro residues. 2 stretches are compositionally biased toward basic and acidic residues: residues 135–144 (AEQKERDPKS) and 156–177 (EEGK…PEKK). The segment at residues 181–240 (KKKTRTVFSRSQVFQLESTFDMKRYLSSSERAGLAASLHLTETQVKIWFQNRRNKWKRQL) is a DNA-binding region (homeobox).

The protein belongs to the HMX homeobox family.

It is found in the nucleus. In terms of biological role, transcription factor involved in specification of neuronal cell types and which is required for inner ear and hypothalamus development. Binds to the 5'-CAAGTG-3' core sequence. The protein is Homeobox protein HMX3 (HMX3) of Gallus gallus (Chicken).